Reading from the N-terminus, the 167-residue chain is Ribosome maturation factor RimM (167 aa).

The region spanning Glu94–Leu167 is the PRC barrel domain.

It belongs to the RimM family. Binds ribosomal protein uS19.

It localises to the cytoplasm. In terms of biological role, an accessory protein needed during the final step in the assembly of 30S ribosomal subunit, possibly for assembly of the head region. Essential for efficient processing of 16S rRNA. May be needed both before and after RbfA during the maturation of 16S rRNA. It has affinity for free ribosomal 30S subunits but not for 70S ribosomes. The chain is Ribosome maturation factor RimM from Thermoanaerobacter pseudethanolicus (strain ATCC 33223 / 39E) (Clostridium thermohydrosulfuricum).